The sequence spans 155 residues: Small ribosomal subunit protein uS9 (155 aa).

This sequence belongs to the universal ribosomal protein uS9 family.

In Rhizobium etli (strain CIAT 652), this protein is Small ribosomal subunit protein uS9.